Here is a 428-residue protein sequence, read N- to C-terminus: Histidinol dehydrogenase (428 aa).

Residues Tyr126, Gln188, and Asn211 each contribute to the NAD(+) site. 3 residues coordinate substrate: Ser234, Gln256, and His259. Zn(2+) is bound by residues Gln256 and His259. Active-site proton acceptor residues include Glu324 and His325. His325, Asp358, Glu412, and His417 together coordinate substrate. A Zn(2+)-binding site is contributed by Asp358. His417 contributes to the Zn(2+) binding site.

Belongs to the histidinol dehydrogenase family. Zn(2+) serves as cofactor.

The catalysed reaction is L-histidinol + 2 NAD(+) + H2O = L-histidine + 2 NADH + 3 H(+). It functions in the pathway amino-acid biosynthesis; L-histidine biosynthesis; L-histidine from 5-phospho-alpha-D-ribose 1-diphosphate: step 9/9. Functionally, catalyzes the sequential NAD-dependent oxidations of L-histidinol to L-histidinaldehyde and then to L-histidine. In Chlorobaculum tepidum (strain ATCC 49652 / DSM 12025 / NBRC 103806 / TLS) (Chlorobium tepidum), this protein is Histidinol dehydrogenase.